The chain runs to 1733 residues: Probable nuclear antigen (1733 aa).

Disordered stretches follow at residues 1–41, 71–394, 437–506, 520–548, 882–907, 993–1141, 1223–1242, 1348–1475, 1585–1608, and 1630–1665; these read MNLF…THFT, PHPP…EQQV, AGAG…EGAQ, APAA…EGGA, LGGG…GAAL, AGGP…EDAA, PERV…RGHA, GAGP…GRAG, SGGG…WGSG, and PRRR…RGGC. Residues 21-31 are compositionally biased toward basic residues; sequence DHHHQQHHHHP. Over residues 77 to 97 the composition is skewed to basic and acidic residues; the sequence is PQDHHRPTPARDHRDPRDHLP. Residues 113-131 show a composition bias toward low complexity; it reads TTTTTIKDPQHPQDPLLLP. Residues 135–147 show a composition bias toward basic and acidic residues; sequence LQEEDPHLLRPTR. Positions 179–189 are enriched in pro residues; the sequence is GGGPPSPPPRP. Residues 190–201 show a composition bias toward low complexity; sequence STSSSSSHQGPP. The span at 202–220 shows a compositional bias: pro residues; sequence STRPPPPQRPPPRWPPPSP. The segment covering 227–240 has biased composition (polar residues); it reads RAGSENTAQTLFSH. The segment covering 272 to 299 has biased composition (pro residues); that stretch reads PPPSPPPRPPPPLPPPPPPPPPPQPPPA. The segment covering 316–326 has biased composition (basic residues); sequence GGRRRGGKRRR. Residues 336-354 are compositionally biased toward acidic residues; that stretch reads DAEEEEDGDGDEDEDEDRA. Residues 355–364 are compositionally biased toward basic and acidic residues; it reads EGEGREDGGE. Gly residues-rich tracts occupy residues 365–374, 454–466, and 479–494; these read GPRGAGGGAG, GAPG…GLEG, and GGDG…GLGV. Residues 495–506 are compositionally biased toward low complexity; the sequence is GLQQRRGAEGAQ. Positions 882–892 are enriched in gly residues; the sequence is LGGGGGGGQQR. A compositionally biased stretch (low complexity) spans 893 to 907; the sequence is GSGVRSGPESEGAAL. Composition is skewed to gly residues over residues 993–1004 and 1027–1043; these read AGGPGAGEAGGG and AGRG…LGEP. Basic and acidic residues-rich tracts occupy residues 1078 to 1087 and 1100 to 1112; these read GAGDEGDRVR and RVAE…RHLL. The segment covering 1116–1127 has biased composition (gly residues); the sequence is GPEGGRGAGGRG. A compositionally biased stretch (gly residues) spans 1385–1407; that stretch reads GPGGLRGRGRGGRGGGGGGGGRG. Composition is skewed to basic residues over residues 1408-1420 and 1444-1453; these read PRGR…RRWR and RGGRGGRGGR. Residues 1454-1474 are compositionally biased toward gly residues; the sequence is GRGGGRAPRGGGGGPGGGGRA. Over residues 1652-1665 the composition is skewed to gly residues; the sequence is RGAGRAGGGGRGGC.

This Sus scrofa (Pig) protein is Probable nuclear antigen.